A 419-amino-acid chain; its full sequence is MSENLWKKALELFAGGVNSPVRAAVKPYPFYVEKSEGAFLYTIDGQRLIDYVLGYGPLILGHAHPYVKKKIIEQIEKGWLYGTPSKKEIELAEKIRSHIPSAEKIRFVNSGTEATMLAIRLARGYTKREKILKFDGNYHGAHDYALINAGSAVSEFNVIISSGIPTSIINTVIVCKYNDLDCVEKHLRTEEIAGVIVEPVMGNMGVILPEQDFLNGLRELTKTYNSVLIFDEVITGFRLGLSGAQGYFKVIPDLTTLGKIIGGGLPIGAVTGKKEIMSNLTPEGKVFNAGTFNANPLTMAAGIATIEVLETTNAYDIANKASKEIAEELDNSLSKKNFKYTINRIQSMFQFFIGISKVTNADDARLANKDLYVKIHEKLLKLGVFIPPSQFETIFTSSSHSDEIVNLTIEAIHKVVSEI.

Lys259 carries the post-translational modification N6-(pyridoxal phosphate)lysine.

This sequence belongs to the class-III pyridoxal-phosphate-dependent aminotransferase family. HemL subfamily. Pyridoxal 5'-phosphate serves as cofactor.

The protein localises to the cytoplasm. The enzyme catalyses (S)-4-amino-5-oxopentanoate = 5-aminolevulinate. It participates in porphyrin-containing compound metabolism; protoporphyrin-IX biosynthesis; 5-aminolevulinate from L-glutamyl-tRNA(Glu): step 2/2. This chain is Glutamate-1-semialdehyde 2,1-aminomutase (hemL), found in Sulfurisphaera tokodaii (strain DSM 16993 / JCM 10545 / NBRC 100140 / 7) (Sulfolobus tokodaii).